The following is a 205-amino-acid chain: Mitotic spindle assembly checkpoint protein MAD2A (205 aa).

Ala2 bears the N-acetylalanine mark. An HORMA domain is found at 14–197 (RGSAEIVAEF…TTIHKVNSMV (184 aa)). Ser130, Ser170, Ser185, and Ser195 each carry phosphoserine. Residues 195–205 (SMVAYKTPVND) are required for assuming the closed conformation and for interaction with CDC20.

The protein belongs to the MAD2 family. Monomer and homodimer. Heterodimerizes with MAD2L1 in order to form a tetrameric MAD1L1-MAD2L1 core complex. In the closed and open conformation, interacts with MAD1L1. Formation of a heterotetrameric core complex containing two molecules each of MAD1L1 and of MAD2L1 promotes binding of another molecule of MAD2L1 to each MAD2L1, resulting in a heterohexamer. Interacts with MAD2L1BP. Interacts with ADAM17/TACE. Interacts with CDC20. Dimeric MAD2L1 in the closed conformation interacts with CDC20. Monomeric MAD2L1 in the open conformation does not interact with CDC20. CDC20 competes with MAD1L1 for MAD2L1 binding. In the closed conformation, interacts with BUB1B. Interacts with TTK. Interacts with TPR. Binds to UBD (via ubiquitin-like 1 domain) during mitosis. Interacts with isoform 1 and isoform 2 of NEK2. Interacts with HSF1; this interaction occurs in mitosis. Phosphorylated on multiple serine residues. The level of phosphorylation varies during the cell cycle and is highest during mitosis. Phosphorylation abolishes interaction with MAD1L1 and reduces interaction with CDC20. Phosphorylated by NEK2.

Its subcellular location is the nucleus. The protein resides in the chromosome. It is found in the centromere. It localises to the kinetochore. The protein localises to the cytoplasm. Its subcellular location is the cytoskeleton. The protein resides in the spindle pole. Functionally, component of the spindle-assembly checkpoint that prevents the onset of anaphase until all chromosomes are properly aligned at the metaphase plate. In the closed conformation (C-MAD2) forms a heterotetrameric complex with MAD1L1 at unattached kinetochores during prometaphase, and recruits an open conformation of MAD2L1 (O-MAD2) which then promotes the conversion of O-MAD2 to C-MAD2. Required for the execution of the mitotic checkpoint which monitors the process of kinetochore-spindle attachment and inhibits the activity of the anaphase promoting complex by sequestering CDC20 until all chromosomes are aligned at the metaphase plate. This Mus musculus (Mouse) protein is Mitotic spindle assembly checkpoint protein MAD2A (Mad2l1).